Consider the following 172-residue polypeptide: Large ribosomal subunit protein uL10 (172 aa).

The protein belongs to the universal ribosomal protein uL10 family. As to quaternary structure, part of the ribosomal stalk of the 50S ribosomal subunit. The N-terminus interacts with L11 and the large rRNA to form the base of the stalk. The C-terminus forms an elongated spine to which L12 dimers bind in a sequential fashion forming a multimeric L10(L12)X complex.

Functionally, forms part of the ribosomal stalk, playing a central role in the interaction of the ribosome with GTP-bound translation factors. The chain is Large ribosomal subunit protein uL10 from Rhizobium leguminosarum bv. trifolii (strain WSM2304).